The sequence spans 360 residues: NAD(P)H-quinone oxidoreductase subunit 1, chloroplastic (360 aa).

Transmembrane regions (helical) follow at residues 30-50 (FLPIFSLVLGILTGVLVLVWL), 98-118 (FSIGPSIAVISILLSYSVIPF), 127-147 (FNIGIFLWIAISSIAPIGLLM), 165-185 (AAQSISYEIPLTLCLLSISLL), 203-223 (FWGWNLWRQPIGFIIFLISSL), 248-268 (YSGIKFGLFYVASYLNLLISS), 297-317 (IFGTTIGIFITLAKTYLFLFI), and 340-360 (FLLPISLGNLLLTTSFQVFSL).

It belongs to the complex I subunit 1 family. As to quaternary structure, NDH is composed of at least 16 different subunits, 5 of which are encoded in the nucleus.

It is found in the plastid. It localises to the chloroplast thylakoid membrane. It catalyses the reaction a plastoquinone + NADH + (n+1) H(+)(in) = a plastoquinol + NAD(+) + n H(+)(out). The catalysed reaction is a plastoquinone + NADPH + (n+1) H(+)(in) = a plastoquinol + NADP(+) + n H(+)(out). Functionally, NDH shuttles electrons from NAD(P)H:plastoquinone, via FMN and iron-sulfur (Fe-S) centers, to quinones in the photosynthetic chain and possibly in a chloroplast respiratory chain. The immediate electron acceptor for the enzyme in this species is believed to be plastoquinone. Couples the redox reaction to proton translocation, and thus conserves the redox energy in a proton gradient. The protein is NAD(P)H-quinone oxidoreductase subunit 1, chloroplastic of Aethionema grandiflorum (Persian stone-cress).